The sequence spans 423 residues: MPRAAPNSINATLNLSSSLGKTVHLPAPAATIFVADPTIADYQAPSNRTIFVFGKKFGRTSLFALDENGEALAELHVVVTQPIADLRAMLRDQVGDYPIHVSYTPRGAILSGTAPNAEVVDIAKRVTEQFLGDGAPIVNNIKVAGSLQVNLSVRVAEVSRSGLKALGINLSAFGQFGNFKVGVLNRGAGLGSATGSGGTAEIGFDNDAVSVGAVLDALAKEHIASVLAEPNLTAMSGETASFLAGGEFPIPVLQENGQTSVEFRRFGVSLEFVPTVLDNNLINIHVKPEVSELSLQGAVQVNGIAVPAVSTRRADTVVELASGQSFVIGGLIRRNVNNDISAFPWLGRIPILGALFRSSSFQKEESELVILVTPYIVRPGSNPNQMSAPTDRMAPALGTPPRARAAISTDAPSVKGDLGFIIE.

Residues 75–145 (LHVVVTQPIA…PIVNNIKVAG (71 aa)) form the BON domain.

It belongs to the bacterial secretin family.

Its function is as follows. Involved in the secretion of an unknown compound. This is an uncharacterized protein from Sinorhizobium fredii (strain NBRC 101917 / NGR234).